The following is a 260-amino-acid chain: Snake venom serine protease homolog (260 aa).

An N-terminal signal peptide occupies residues Met1–Ala18. The propeptide occupies Gln19 to Leu24. A Peptidase S1 domain is found at Ile25–Ala251. 6 disulfide bridges follow: Cys31-Cys165, Cys52-Cys68, Cys100-Cys258, Cys144-Cys212, Cys176-Cys191, and Cys202-Cys227. The Charge relay system role is filled by Asp112. N-linked (GlcNAc...) asparagine glycans are attached at residues Asn123 and Asn124. Ser206 (charge relay system) is an active-site residue.

The protein belongs to the peptidase S1 family. Snake venom subfamily. As to expression, expressed by the venom gland.

Its subcellular location is the secreted. Its function is as follows. Snake venom serine protease homolog. May act in the hemostasis system of the prey. The polypeptide is Snake venom serine protease homolog (Protobothrops jerdonii (Jerdon's pitviper)).